The chain runs to 90 residues: Acylphosphatase (90 aa).

Positions 3 to 90 (QKLFIVTGHV…EQFEHFEIRR (88 aa)) constitute an Acylphosphatase-like domain. Catalysis depends on residues R18 and N36.

The protein belongs to the acylphosphatase family.

The catalysed reaction is an acyl phosphate + H2O = a carboxylate + phosphate + H(+). The chain is Acylphosphatase (acyP) from Actinobacillus pleuropneumoniae serotype 5b (strain L20).